Here is a 160-residue protein sequence, read N- to C-terminus: Cytochrome b6-f complex subunit 4 (160 aa).

3 helical membrane-spanning segments follow: residues 36–56, 95–115, and 131–151; these read LLYI…GLAV, LLGV…PFLE, and TVFL…ALPI.

Belongs to the cytochrome b family. PetD subfamily. As to quaternary structure, the 4 large subunits of the cytochrome b6-f complex are cytochrome b6, subunit IV (17 kDa polypeptide, petD), cytochrome f and the Rieske protein, while the 4 small subunits are petG, petL, petM and petN. The complex functions as a dimer.

The protein localises to the plastid. Its subcellular location is the chloroplast thylakoid membrane. Its function is as follows. Component of the cytochrome b6-f complex, which mediates electron transfer between photosystem II (PSII) and photosystem I (PSI), cyclic electron flow around PSI, and state transitions. The sequence is that of Cytochrome b6-f complex subunit 4 from Chara vulgaris (Common stonewort).